The primary structure comprises 497 residues: Galactose-1-phosphate uridylyltransferase (497 aa).

It belongs to the galactose-1-phosphate uridylyltransferase type 2 family.

Its subcellular location is the cytoplasm. It catalyses the reaction alpha-D-galactose 1-phosphate + UDP-alpha-D-glucose = alpha-D-glucose 1-phosphate + UDP-alpha-D-galactose. The protein operates within carbohydrate metabolism; galactose metabolism. The sequence is that of Galactose-1-phosphate uridylyltransferase from Enterococcus faecalis (strain ATCC 700802 / V583).